A 358-amino-acid polypeptide reads, in one-letter code: Arginine kinase (358 aa).

Residues 2 to 84 enclose the Phosphagen kinase N-terminal domain; that stretch reads SDADLFSKLD…LDEVIKDYHK (83 aa). 57-61 serves as a coordination point for substrate; sequence GVGIY. In terms of domain architecture, Phosphagen kinase C-terminal spans 112-350; sequence FIVSTRVRVG…EEILKREKEL (239 aa). Residues 115–119 and histidine 178 contribute to the ATP site; that span reads STRVR. Residue glutamate 218 participates in substrate binding. ATP is bound at residue arginine 222. Cysteine 265 lines the substrate pocket. ATP-binding positions include 274–278 and 303–308; these read RASVH and RGIHGE. Glutamate 308 is a binding site for substrate.

The protein belongs to the ATP:guanido phosphotransferase family.

It carries out the reaction L-arginine + ATP = N(omega)-phospho-L-arginine + ADP + H(+). The sequence is that of Arginine kinase from Turbo cornutus (Horned turban).